The chain runs to 951 residues: Glycine dehydrogenase (decarboxylating) (951 aa).

An N6-(pyridoxal phosphate)lysine modification is found at Lys709.

Belongs to the GcvP family. As to quaternary structure, the glycine cleavage system is composed of four proteins: P, T, L and H. It depends on pyridoxal 5'-phosphate as a cofactor.

The catalysed reaction is N(6)-[(R)-lipoyl]-L-lysyl-[glycine-cleavage complex H protein] + glycine + H(+) = N(6)-[(R)-S(8)-aminomethyldihydrolipoyl]-L-lysyl-[glycine-cleavage complex H protein] + CO2. The glycine cleavage system catalyzes the degradation of glycine. The P protein binds the alpha-amino group of glycine through its pyridoxal phosphate cofactor; CO(2) is released and the remaining methylamine moiety is then transferred to the lipoamide cofactor of the H protein. This chain is Glycine dehydrogenase (decarboxylating), found in Gluconobacter oxydans (strain 621H) (Gluconobacter suboxydans).